The following is a 38-amino-acid chain: Potassium channel toxin alpha-KTx 2.3 (38 aa).

3 cysteine pairs are disulfide-bonded: C7-C29, C13-C34, and C17-C36.

This sequence belongs to the short scorpion toxin superfamily. Potassium channel inhibitor family. Alpha-KTx 02 subfamily. Expressed by the venom gland.

The protein resides in the secreted. Its function is as follows. Inhibitor of voltage-gated potassium channels (Kv). It is capable of displacing the binding of radio-labeled noxiustoxin (AC P08815) to rat brain synaptosomes with high affinity (about 100 pM). It is also capable of inhibiting transient potassium-currents (resembling I(A)-type currents), in cultured rat cerebellar granule cells. About 50% of the peak currents are reduced by application of a 1.5 uM solution of this toxin. This chain is Potassium channel toxin alpha-KTx 2.3, found in Centruroides limpidus (Mexican scorpion).